We begin with the raw amino-acid sequence, 188 residues long: 2-amino-4-hydroxy-6-hydroxymethyldihydropteridine pyrophosphokinase (188 aa).

Belongs to the HPPK family.

It carries out the reaction 6-hydroxymethyl-7,8-dihydropterin + ATP = (7,8-dihydropterin-6-yl)methyl diphosphate + AMP + H(+). It functions in the pathway cofactor biosynthesis; tetrahydrofolate biosynthesis; 2-amino-4-hydroxy-6-hydroxymethyl-7,8-dihydropteridine diphosphate from 7,8-dihydroneopterin triphosphate: step 4/4. Its function is as follows. Catalyzes the transfer of pyrophosphate from adenosine triphosphate (ATP) to 6-hydroxymethyl-7,8-dihydropterin, an enzymatic step in folate biosynthesis pathway. This Mycobacterium tuberculosis (strain ATCC 25618 / H37Rv) protein is 2-amino-4-hydroxy-6-hydroxymethyldihydropteridine pyrophosphokinase (folK).